The sequence spans 229 residues: MNPLTRVALAVAAFAALVLALSACGPAHVAGHVPKRRDYAVPDAAGQEAQVASAGSTWREGRAASMLYTDARALRENDLVVVRIEEIADAKRSADTDLTRRSELNASIEAFLTSLDTPYALKGGATTGFKGLGSTARTERLTATVPAVVRKVLPNGNLFIEGHRVVLVNAEEQHFYISGVVRPIDIDQENGVKSSMVADAEIEFTGRGVLSDNQRQGWLSRLLGWFWPF.

An N-terminal signal peptide occupies residues 1-23 (MNPLTRVALAVAAFAALVLALSA). Cysteine 24 carries the N-palmitoyl cysteine lipid modification. Cysteine 24 carries the S-diacylglycerol cysteine lipid modification.

The protein belongs to the FlgH family. As to quaternary structure, the basal body constitutes a major portion of the flagellar organelle and consists of four rings (L,P,S, and M) mounted on a central rod.

Its subcellular location is the cell outer membrane. The protein resides in the bacterial flagellum basal body. In terms of biological role, assembles around the rod to form the L-ring and probably protects the motor/basal body from shearing forces during rotation. The chain is Flagellar L-ring protein from Anaeromyxobacter dehalogenans (strain 2CP-1 / ATCC BAA-258).